An 86-amino-acid chain; its full sequence is Small ribosomal subunit protein uS15 (86 aa).

The protein belongs to the universal ribosomal protein uS15 family. As to quaternary structure, part of the 30S ribosomal subunit. Forms a bridge to the 50S subunit in the 70S ribosome, contacting the 23S rRNA.

One of the primary rRNA binding proteins, it binds directly to 16S rRNA where it helps nucleate assembly of the platform of the 30S subunit by binding and bridging several RNA helices of the 16S rRNA. Its function is as follows. Forms an intersubunit bridge (bridge B4) with the 23S rRNA of the 50S subunit in the ribosome. This chain is Small ribosomal subunit protein uS15, found in Mycoplasma pneumoniae (strain ATCC 29342 / M129 / Subtype 1) (Mycoplasmoides pneumoniae).